The chain runs to 810 residues: Interleukin-4 receptor subunit alpha (810 aa).

The N-terminal stretch at 1–25 is a signal peptide; sequence MGRLCTKFLTSVGCLILLLVTGSGS. Topologically, residues 26–233 are extracellular; it reads IKVLGEPTCF…NHFQLPLIQR (208 aa). An intrachain disulfide couples Cys-34 to Cys-44. An N-linked (GlcNAc...) asparagine glycan is attached at Asn-72. Residues Cys-75 and Cys-87 are joined by a disulfide bond. The region spanning 126 to 224 is the Fibronectin type-III domain; that stretch reads APDNLTLHTN…EWSPSITWYN (99 aa). Residues Asn-129, Asn-135, and Asn-163 are each glycosylated (N-linked (GlcNAc...) asparagine). Ser-165 bears the Phosphoserine mark. Positions 213-217 match the WSXWS motif motif; it reads WSEWS. A helical transmembrane segment spans residues 234 to 257; it reads LPLGVTISCLCIPLFCLFCYFSIT. The Cytoplasmic portion of the chain corresponds to 258–810; it reads KIKKIWWDQI…PVGALGIAVS (553 aa). A Box 1 motif motif is present at residues 263-271; it reads WWDQIPTPA. The tract at residues 441 to 557 is required for IRS1 activation and IL4-induced cell growth; it reads GSGQASVSWA…ESWEQILHMS (117 aa). The disordered stretch occupies residues 460 to 482; sequence ATCQVTEQPSHPGPLSGSPAQSA. Phosphotyrosine is present on Tyr-500. Residues 510–546 are disordered; that stretch reads APNPGELAPEQQQADHLEEEEPPSPADPHSSGPPMQP. The required for IL4-induced gene expression stretch occupies residues 557 to 653; the sequence is SVLQHGAAAG…SSVPLFTFGL (97 aa). Residues Tyr-575, Tyr-603, and Tyr-631 each carry the phosphotyrosine modification. A disordered region spans residues 586–672; the sequence is AAQDPGVPGV…NSDPPKSPPE (87 aa). Residues 635–647 show a composition bias toward low complexity; the sequence is QNPVPNQSPSSVP. Positions 707 to 712 match the ITIM motif motif; sequence IVYSSL. The interval 766–810 is disordered; sequence PPEANLMSAPKTPSNLSGEGKGPGHSPVPSQTTEVPVGALGIAVS.

Belongs to the type I cytokine receptor family. Type 4 subfamily. In terms of assembly, the functional IL4 receptor is formed by initial binding of IL4 to IL4R. Subsequent recruitment to the complex of the common gamma chain, in immune cells, creates a type I receptor and, in non-immune cells, of IL13RA1 forms a type II receptor. IL4R can also interact with the IL13/IL13RA1 complex to form a similar type II receptor. Interacts with the SH2-containing phosphatases, PTPN6/SHIP1, PTPN11/SHIP2 and INPP5D/SHIP. Interacts with JAK3. Interacts with PIK3C3. Interacts with JAK1 through a Box 1-containing region; inhibited by SOCS5. Interacts with SOCS5; inhibits IL4 signaling. Interacts with CLM1. Interacts with IL13RA2. Post-translationally, on IL4 binding, phosphorylated on C-terminal tyrosine residues. Soluble IL4R can also be produced by proteolytic cleavage at the cell surface (shedding). As to expression, expressed in both Th1 and Th2 cells.

It localises to the cell membrane. The protein resides in the secreted. Functionally, receptor for both interleukin 4 and interleukin 13. Couples to the JAK1/2/3-STAT6 pathway. The IL4 response is involved in promoting Th2 differentiation. The IL4/IL13 responses are involved in regulating IgE production and, chemokine and mucus production at sites of allergic inflammation. In certain cell types, can signal through activation of insulin receptor substrates, IRS1/IRS2. The polypeptide is Interleukin-4 receptor subunit alpha (Il4r) (Mus musculus (Mouse)).